Consider the following 914-residue polypeptide: Alanine--tRNA ligase (914 aa).

Zn(2+) contacts are provided by His-613, His-617, Cys-717, and His-721.

The protein belongs to the class-II aminoacyl-tRNA synthetase family. Requires Zn(2+) as cofactor.

Its subcellular location is the cytoplasm. The catalysed reaction is tRNA(Ala) + L-alanine + ATP = L-alanyl-tRNA(Ala) + AMP + diphosphate. Its function is as follows. Catalyzes the attachment of alanine to tRNA(Ala) in a two-step reaction: alanine is first activated by ATP to form Ala-AMP and then transferred to the acceptor end of tRNA(Ala). Also edits incorrectly charged Ser-tRNA(Ala) and Gly-tRNA(Ala) via its editing domain. This chain is Alanine--tRNA ligase, found in Pyrococcus furiosus (strain ATCC 43587 / DSM 3638 / JCM 8422 / Vc1).